Here is a 419-residue protein sequence, read N- to C-terminus: Inward rectifier potassium channel 16 (419 aa).

Residues 1-67 (MSYYGSSYRI…MVDIFTTLVD (67 aa)) are Cytoplasmic-facing. A helical transmembrane segment spans residues 68–94 (TKWRHMFVIFSLSYILSWLIFGSIFWL). Over 95–117 (IAFHHGDLLSDPDITPCVDNVHS) the chain is Extracellular. Residues 118–134 (FTAAFLFSLETQTTIGY) constitute an intramembrane region (helical; Pore-forming). The Selectivity filter signature appears at 131–136 (TIGYGY). At 135 to 143 (GYRCVTEEC) the chain is on the extracellular side. A helical membrane pass occupies residues 144–171 (SVAVLTVILQSILSCIINTFIIGAALAK). The Cytoplasmic segment spans residues 172 to 419 (MATARKRAQT…LNRISMESQM (248 aa)). S358, S374, and S376 each carry phosphoserine.

The protein belongs to the inward rectifier-type potassium channel (TC 1.A.2.1) family. KCNJ16 subfamily. It forms heteromeric channels with Kir4.1/KCNJ10; this interaction is required for KCNJ16 localization to the basolateral membrane in kidney cells. As a heteromer with KCNJ10, may interact with MAGI1; this interaction may facilitate KCNJ10/KCNJ16 potassium channel expression at the basolateral membrane in kidney cells. May form heteromers with Kir2.1/KCNJ2. Can form heteromeric channels with Kir4.2/KCNJ15. As to expression, abundantly expressed in the proximal and distal segments of the nephron.

The protein resides in the membrane. The protein localises to the basolateral cell membrane. The catalysed reaction is K(+)(in) = K(+)(out). Channel activity is strongly regulated by variations of cytosolic pH; channels are activated by alkaline and inhibited by acidic pH values. Activated by phosphatidylinositol 4,5 biphosphate (PtdIns(4,5)P2). In terms of biological role, inward rectifier potassium channels are characterized by a greater tendency to allow potassium to flow into the cell rather than out of it. Their voltage dependence is regulated by the concentration of extracellular potassium; as external potassium is raised, the voltage range of the channel opening shifts to more positive voltages. The inward rectification is mainly due to the blockage of outward current by internal magnesium. KCNJ16 may be involved in the regulation of fluid and pH balance. In the kidney, together with KCNJ10, mediates basolateral K(+) recycling in distal tubules; this process is critical for Na(+) reabsorption at the tubules. The sequence is that of Inward rectifier potassium channel 16 (Kcnj16) from Mus musculus (Mouse).